Consider the following 619-residue polypeptide: Chitinase C (619 aa).

The signal sequence occupies residues 1-30 (MRFRHKAAALAATLALPLAGLVGLASPAQA). The CBM2 domain maps to 31–134 (ATSATATFAK…KLNGGSCDGT (104 aa)). A Fibronectin type-III domain is found at 144–229 (APGTPTASNI…GAVKVTTTGG (86 aa)). The disordered stretch occupies residues 212-236 (ADQTGPASGAVKVTTTGGGDGGNPG). Over residues 227-236 (TGGGDGGNPG) the composition is skewed to gly residues. The GH18 domain occupies 240-619 (EVKMGYFTNW…TPAVRTTRRH (380 aa)). Chitin is bound by residues 312-313 (DQ) and 339-342 (GGWT). The active-site Proton donor is Glu-382. Residues Tyr-383, 449–452 (MTYD), and Trp-589 each bind chitin.

This sequence belongs to the glycosyl hydrolase 18 family. Chitinase class II subfamily.

It carries out the reaction Random endo-hydrolysis of N-acetyl-beta-D-glucosaminide (1-&gt;4)-beta-linkages in chitin and chitodextrins.. The protein is Chitinase C (chiC) of Streptomyces lividans.